The chain runs to 339 residues: Cathepsin B (339 aa).

The signal sequence occupies residues 1-17 (MWWSLIPLSCLLALTSA). A propeptide spans 18 to 79 (HDKPSSHPLS…ERVGFSEDIN (62 aa)) (activation peptide). 6 disulfide bridges follow: Cys93/Cys122, Cys105/Cys150, Cys141/Cys207, Cys142/Cys146, Cys179/Cys211, and Cys187/Cys198. Residue Cys108 is part of the active site. The N-linked (GlcNAc...) asparagine glycan is linked to Asn192. Lys220 carries the post-translational modification N6-acetyllysine. Catalysis depends on residues His278 and Asn298. Positions 334–339 (QYWGRF) are excised as a propeptide.

The protein belongs to the peptidase C1 family. Dimer of a heavy chain and a light chain cross-linked by a disulfide bond. Interacts with SRPX2. Directly interacts with SHKBP1. Expressed in the epithelial cells of the prostate and mammary gland.

The protein resides in the lysosome. Its subcellular location is the melanosome. It localises to the secreted. It is found in the extracellular space. The protein localises to the apical cell membrane. The catalysed reaction is Hydrolysis of proteins with broad specificity for peptide bonds. Preferentially cleaves -Arg-Arg-|-Xaa bonds in small molecule substrates (thus differing from cathepsin L). In addition to being an endopeptidase, shows peptidyl-dipeptidase activity, liberating C-terminal dipeptides.. Functionally, thiol protease which is believed to participate in intracellular degradation and turnover of proteins. Cleaves matrix extracellular phosphoglycoprotein MEPE. Involved in the solubilization of cross-linked TG/thyroglobulin in the thyroid follicle lumen. Has also been implicated in tumor invasion and metastasis. This Rattus norvegicus (Rat) protein is Cathepsin B (Ctsb).